A 136-amino-acid polypeptide reads, in one-letter code: Probable intron-encoded DNA endonuclease 3 (136 aa).

The protein belongs to the LAGLIDADG endonuclease family.

The protein localises to the mitochondrion. Mitochondrial DNA endonuclease involved in intron homing. The sequence is that of Probable intron-encoded DNA endonuclease 3 (hegI3) from Mycosarcoma maydis (Corn smut fungus).